Reading from the N-terminus, the 138-residue chain is Actophorin (138 aa).

One can recognise an ADF-H domain in the interval 3–134 (GIQLADEVTS…NLDEVIAKVK (132 aa)).

The protein belongs to the actin-binding proteins ADF family. In terms of assembly, interacts with F-actin. Does not interact with G-actin. Interacts with 14-3-3 protein 3.

It is found in the cytoplasm. It localises to the cytoskeleton. The protein resides in the cell membrane. Its subcellular location is the cell projection. The protein localises to the phagocytic cup. It is found in the pseudopodium. Its function is as follows. Actin-binding protein that severs actin filaments. This Entamoeba histolytica (strain ATCC 30459 / HM-1:IMSS / ABRM) protein is Actophorin.